The primary structure comprises 764 residues: Hemocyte protein-glutamine gamma-glutamyltransferase (764 aa).

Catalysis depends on residues Cys-343, His-402, and Asp-425. Residues Asn-465, Asp-467, Glu-522, and Glu-527 each coordinate Ca(2+).

It belongs to the transglutaminase superfamily. Transglutaminase family. Requires Ca(2+) as cofactor. As to expression, mainly expressed in hemocytes, hepatopancreas, and gastric tissues. On the other hand nothing was detected in the heart, intestine and muscle.

The protein localises to the membrane. The catalysed reaction is L-glutaminyl-[protein] + L-lysyl-[protein] = [protein]-L-lysyl-N(6)-5-L-glutamyl-[protein] + NH4(+). In terms of biological role, catalyzes the cross-linking of proteins and the conjugation of polyamines to proteins. This Tachypleus tridentatus (Japanese horseshoe crab) protein is Hemocyte protein-glutamine gamma-glutamyltransferase.